A 69-amino-acid chain; its full sequence is MKKDTKTARSAVTGKFVTQPIGGKKAAKFAQVEGLKMNAASKALSEKLTASGLKGDAYRSEIVKAFKKG.

This is an uncharacterized protein from Sinorhizobium fredii (strain NBRC 101917 / NGR234).